Reading from the N-terminus, the 179-residue chain is Large ribosomal subunit protein uL5 (179 aa).

The protein belongs to the universal ribosomal protein uL5 family. In terms of assembly, part of the 50S ribosomal subunit; part of the 5S rRNA/L5/L18/L25 subcomplex. Contacts the 5S rRNA and the P site tRNA. Forms a bridge to the 30S subunit in the 70S ribosome.

Its function is as follows. This is one of the proteins that bind and probably mediate the attachment of the 5S RNA into the large ribosomal subunit, where it forms part of the central protuberance. In the 70S ribosome it contacts protein S13 of the 30S subunit (bridge B1b), connecting the 2 subunits; this bridge is implicated in subunit movement. Contacts the P site tRNA; the 5S rRNA and some of its associated proteins might help stabilize positioning of ribosome-bound tRNAs. The chain is Large ribosomal subunit protein uL5 from Staphylococcus aureus (strain MW2).